We begin with the raw amino-acid sequence, 126 residues long: Histone H2B type 1-C/E/G (126 aa).

A compositionally biased stretch (low complexity) spans 1–12 (MPEPAKSAPAPK). The segment at 1 to 36 (MPEPAKSAPAPKKGSKKAVTKAQKKDGKKRKRSRKE) is disordered. Proline 2 is subject to N-acetylproline. Glutamate 3 bears the ADP-ribosyl glutamic acid mark. Residue lysine 6 is modified to N6-(2-hydroxyisobutyryl)lysine; alternate. Lysine 6 carries the post-translational modification N6-(beta-hydroxybutyryl)lysine; alternate. Lysine 6 carries the post-translational modification N6-acetyllysine; alternate. Lysine 6 carries the post-translational modification N6-butyryllysine; alternate. Lysine 6 is modified (N6-crotonyllysine; alternate). Lysine 6 bears the N6-lactoyllysine; alternate mark. Lysine 6 is covalently cross-linked (Glycyl lysine isopeptide (Lys-Gly) (interchain with G-Cter in SUMO2); alternate). At serine 7 the chain carries ADP-ribosylserine. N6-(beta-hydroxybutyryl)lysine; alternate is present on lysine 12. Lysine 12 and lysine 13 each carry N6-acetyllysine; alternate. 2 positions are modified to N6-crotonyllysine; alternate: lysine 12 and lysine 13. An N6-lactoyllysine; alternate modification is found at lysine 12. An N6-(2-hydroxyisobutyryl)lysine; alternate modification is found at lysine 13. Serine 15 bears the Phosphoserine; by STK4/MST1 mark. Residues lysine 16, lysine 17, lysine 21, and lysine 24 each carry the N6-acetyllysine; alternate modification. N6-crotonyllysine; alternate is present on residues lysine 16, lysine 17, lysine 21, and lysine 24. Residues lysine 16, lysine 17, lysine 21, and lysine 24 each carry the N6-lactoyllysine; alternate modification. N6-glutaryllysine; alternate is present on lysine 17. N6-(2-hydroxyisobutyryl)lysine; alternate is present on residues lysine 21 and lysine 24. Lysine 21 is modified (N6-(beta-hydroxybutyryl)lysine; alternate). The residue at position 21 (lysine 21) is an N6-butyryllysine; alternate. A Glycyl lysine isopeptide (Lys-Gly) (interchain with G-Cter in SUMO2); alternate cross-link involves residue lysine 21. N6-(2-hydroxyisobutyryl)lysine is present on lysine 25. The residue at position 35 (lysine 35) is an N6-(2-hydroxyisobutyryl)lysine; alternate. The residue at position 35 (lysine 35) is an N6-(beta-hydroxybutyryl)lysine; alternate. N6-crotonyllysine; alternate is present on lysine 35. N6-glutaryllysine; alternate is present on lysine 35. Lysine 35 is modified (N6-succinyllysine; alternate). Lysine 35 is covalently cross-linked (Glycyl lysine isopeptide (Lys-Gly) (interchain with G-Cter in ubiquitin); alternate). The residue at position 36 (glutamate 36) is a PolyADP-ribosyl glutamic acid. A Phosphoserine; by AMPK modification is found at serine 37. Lysine 44, lysine 47, and lysine 58 each carry N6-(2-hydroxyisobutyryl)lysine; alternate. An N6-lactoyllysine; alternate modification is found at lysine 44. Lysine 44 and lysine 47 each carry N6-glutaryllysine; alternate. Residue lysine 47 is modified to N6-methyllysine; alternate. Position 58 is an N6,N6-dimethyllysine; alternate (lysine 58). The residue at position 80 (arginine 80) is a Dimethylated arginine. At lysine 86 the chain carries N6-(2-hydroxyisobutyryl)lysine; alternate. Lysine 86 is subject to N6-acetyllysine; alternate. Lysine 86 is subject to N6-lactoyllysine; alternate. Lysine 86 is subject to N6,N6,N6-trimethyllysine; alternate. Arginine 87 and arginine 93 each carry omega-N-methylarginine. N6-(2-hydroxyisobutyryl)lysine; alternate is present on lysine 109. Lysine 109 carries the post-translational modification N6-(beta-hydroxybutyryl)lysine; alternate. Position 109 is an N6-lactoyllysine; alternate (lysine 109). An N6-glutaryllysine; alternate modification is found at lysine 109. At lysine 109 the chain carries N6-methyllysine; alternate. O-linked (GlcNAc) serine glycosylation occurs at serine 113. Position 116 is a phosphothreonine (threonine 116). N6-(2-hydroxyisobutyryl)lysine; alternate is present on residues lysine 117 and lysine 121. Lysine 117 carries the post-translational modification N6-(beta-hydroxybutyryl)lysine; alternate. N6-lactoyllysine; alternate occurs at positions 117 and 121. Lysine 117 and lysine 121 each carry N6-glutaryllysine; alternate. An N6-succinyllysine; alternate mark is found at lysine 117 and lysine 121. Residue lysine 117 is modified to N6-methylated lysine; alternate. Residue lysine 121 forms a Glycyl lysine isopeptide (Lys-Gly) (interchain with G-Cter in ubiquitin); alternate linkage.

Belongs to the histone H2B family. In terms of assembly, the nucleosome is a histone octamer containing two molecules each of H2A, H2B, H3 and H4 assembled in one H3-H4 heterotetramer and two H2A-H2B heterodimers. The octamer wraps approximately 147 bp of DNA. Interacts with VRK1; the interaction is mediated by the nucleosome acidic patch, a cluster of negatively charged residues of H2A and H2B forming a cleft within the nucleosome core. In terms of processing, monoubiquitination at Lys-35 (H2BK34Ub) by the MSL1/MSL2 dimer is required for histone H3 'Lys-4' (H3K4me) and 'Lys-79' (H3K79me) methylation and transcription activation at specific gene loci, such as HOXA9 and MEIS1 loci. Similarly, monoubiquitination at Lys-121 (H2BK120Ub) by the RNF20/40 complex gives a specific tag for epigenetic transcriptional activation and is also prerequisite for histone H3 'Lys-4' and 'Lys-79' methylation. It also functions cooperatively with the FACT dimer to stimulate elongation by RNA polymerase II. H2BK120Ub also acts as a regulator of mRNA splicing: deubiquitination by USP49 is required for efficient cotranscriptional splicing of a large set of exons. Post-translationally, phosphorylated on Ser-15 (H2BS14ph) by STK4/MST1 during apoptosis; which facilitates apoptotic chromatin condensation. Also phosphorylated on Ser-15 in response to DNA double strand breaks (DSBs), and in correlation with somatic hypermutation and immunoglobulin class-switch recombination. Phosphorylation at Ser-37 (H2BS36ph) by AMPK in response to stress promotes transcription. GlcNAcylation at Ser-113 promotes monoubiquitination of Lys-121. It fluctuates in response to extracellular glucose, and associates with transcribed genes. In terms of processing, ADP-ribosylated by PARP1 or PARP2 on Ser-7 (H2BS6ADPr) in response to DNA damage. H2BS6ADPr promotes recruitment of CHD1L. Mono-ADP-ribosylated on Glu-3 (H2BE2ADPr) by PARP3 in response to single-strand breaks. Poly ADP-ribosylation on Glu-36 (H2BE35ADPr) by PARP1 regulates adipogenesis: it inhibits phosphorylation at Ser-37 (H2BS36ph), thereby blocking expression of pro-adipogenetic genes. Post-translationally, crotonylation (Kcr) is specifically present in male germ cells and marks testis-specific genes in post-meiotic cells, including X-linked genes that escape sex chromosome inactivation in haploid cells. Crotonylation marks active promoters and enhancers and confers resistance to transcriptional repressors. It is also associated with post-meiotically activated genes on autosomes. Hydroxybutyrylation of histones is induced by starvation. In terms of processing, lactylated in macrophages by EP300/P300 by using lactoyl-CoA directly derived from endogenous or exogenous lactate, leading to stimulates gene transcription.

It localises to the nucleus. The protein resides in the chromosome. Core component of nucleosome. Nucleosomes wrap and compact DNA into chromatin, limiting DNA accessibility to the cellular machineries which require DNA as a template. Histones thereby play a central role in transcription regulation, DNA repair, DNA replication and chromosomal stability. DNA accessibility is regulated via a complex set of post-translational modifications of histones, also called histone code, and nucleosome remodeling. The sequence is that of Histone H2B type 1-C/E/G from Mus musculus (Mouse).